The chain runs to 348 residues: GDSL esterase/lipase At4g30140 (348 aa).

A signal peptide spans 1–28; the sequence is MVEGESKALWIILATVFAVAAVAPAVHG. The active-site Nucleophile is the S40. Catalysis depends on residues D316 and H319. An N-linked (GlcNAc...) asparagine glycan is attached at N342.

It belongs to the 'GDSL' lipolytic enzyme family.

It localises to the secreted. This Arabidopsis thaliana (Mouse-ear cress) protein is GDSL esterase/lipase At4g30140.